A 218-amino-acid polypeptide reads, in one-letter code: MDKSDSASAGRNRRRRPRRGSRSASSSADVNFRVLSQQLSRLNKTLAAGRPTINHPTFVGSERCKPGYTFTSITLRPPKIDRGSYYGKRLFLPESVTEFDKKLVSRIQIRVNPLPKFDSTVWVTVRKVPASSDLSVAAISTMFADGASPVLVYQYAASGVQANNKLLYDLSPMRADIGDMRKYAVLVYSKDDALESDELVLHVDIEHQRIPTSGVLPV.

N-acetylmethionine; by host is present on M1. Residues 1-10 show a composition bias toward low complexity; that stretch reads MDKSDSASAG. The interval 1-28 is disordered; sequence MDKSDSASAGRNRRRRPRRGSRSASSSA. A compositionally biased stretch (basic residues) spans 11–21; that stretch reads RNRRRRPRRGS.

The protein belongs to the cucumovirus capsid protein family.

The protein resides in the virion. Capsid protein. Probably binds RNA and plays a role in packaging. The protein is Capsid protein of Cucumber mosaic virus (strain M48) (CMV).